The chain runs to 150 residues: Avidin-related protein 3 (150 aa).

A signal peptide spans 1–24; it reads MVHTTSPLLLLLLLSLALVAPSLS. The 122-residue stretch at 26–147 folds into the Avidin-like domain; it reads RKCSLTGKWT…GYNNFTRQRT (122 aa). Cysteines 28 and 105 form a disulfide. 5 residues coordinate biotin: Asn-36, Ser-40, Tyr-57, Thr-59, and Asp-63. An N-linked (GlcNAc...) asparagine glycan is attached at Asn-93. Residues Ser-95, Ser-99, and Asn-140 each coordinate biotin. An N-linked (GlcNAc...) asparagine glycan is attached at Asn-141.

Belongs to the avidin/streptavidin family. In terms of assembly, homotetramer. Post-translationally, glycosylated.

The protein resides in the secreted. Forms a strong non-covalent specific complex with biotin. The sequence is that of Avidin-related protein 3 (AVR3) from Gallus gallus (Chicken).